The sequence spans 284 residues: uncharacterized protein (284 aa).

The N-terminal stretch at 1 to 23 is a signal peptide; the sequence is MKRGCAIAVMICGLITSVSAASA.

The protein belongs to the surface antigen msp4 family.

This is an uncharacterized protein from Brucella abortus (strain 2308).